The chain runs to 203 residues: MANNFSQLAKKSRNELSSSKVKKEVIENPPLEIFKLGNDVLRTNAKRIGKVDLDTRNLAKDMLKSMYSAKGIGLAAPQVGISKELLVIDINFEDSAAEPLILINPEITAFGNTLNSYEEGCLSIPGVYLNVVRPSTIKLRFSDEMGRPRKMNADGLLARCIQHEVDHLRGVLFVDRVTSKEDLKTELKKEGFQMKDVFPISQS.

Fe cation contacts are provided by Cys-121 and His-163. The active site involves Glu-164. His-167 serves as a coordination point for Fe cation.

The protein belongs to the polypeptide deformylase family. Fe(2+) is required as a cofactor.

The enzyme catalyses N-terminal N-formyl-L-methionyl-[peptide] + H2O = N-terminal L-methionyl-[peptide] + formate. Functionally, removes the formyl group from the N-terminal Met of newly synthesized proteins. Requires at least a dipeptide for an efficient rate of reaction. N-terminal L-methionine is a prerequisite for activity but the enzyme has broad specificity at other positions. This Prochlorococcus marinus (strain MIT 9515) protein is Peptide deformylase.